The sequence spans 292 residues: NAC domain-containing protein 96 (292 aa).

In terms of domain architecture, NAC spans 6-158; the sequence is LPPGFRFHPT…AFVLCRVAMK (153 aa). Residues 106 to 164 mediate DNA binding; it reads IGYRKTLVFYKGRAPLGDRSNWIMHEYRLCDDDTSQGSQNLKGAFVLCRVAMKNEIKTN. The segment at 171–199 is disordered; the sequence is PSEQTIGSGESSGLSSRVTSPSRDETMPF. Residues 172–191 show a composition bias toward polar residues; sequence SEQTIGSGESSGLSSRVTSP.

In terms of assembly, interacts with ABF2 and ABF4. In terms of tissue distribution, expressed in roots, rosettes leaves, cauline leaves and stems.

It localises to the nucleus. In terms of biological role, transcriptional activator involved in the positive regulation of abscisic acid (ABA) responsive genes. Acts as a positive factor of ABA-mediated responses. Involved in the transcriptional activation of ABA-inducible genes in response to dehydration and osmotic stresses. Plays a positive role in both stomatal closure and water loss under dehydration stress conditions. Acts synergistically with ABF2 to activate the dehydration stress-response factor RD29A transcription. Binds to the consensus core cis-acting elements 5'-CGTA-3' and 5'-CACG-3' at the RD29A promoter. Involved in hypocotyl graft union formation. Required for the auxin-mediated promotion of vascular tissue proliferation during hypocotyl graft attachment. The polypeptide is NAC domain-containing protein 96 (Arabidopsis thaliana (Mouse-ear cress)).